A 347-amino-acid chain; its full sequence is Nicotinate-nucleotide--dimethylbenzimidazole phosphoribosyltransferase (347 aa).

The active-site Proton acceptor is Glu316.

This sequence belongs to the CobT family.

It catalyses the reaction 5,6-dimethylbenzimidazole + nicotinate beta-D-ribonucleotide = alpha-ribazole 5'-phosphate + nicotinate + H(+). Its pathway is nucleoside biosynthesis; alpha-ribazole biosynthesis; alpha-ribazole from 5,6-dimethylbenzimidazole: step 1/2. In terms of biological role, catalyzes the synthesis of alpha-ribazole-5'-phosphate from nicotinate mononucleotide (NAMN) and 5,6-dimethylbenzimidazole (DMB). The sequence is that of Nicotinate-nucleotide--dimethylbenzimidazole phosphoribosyltransferase from Vibrio campbellii (strain ATCC BAA-1116).